A 473-amino-acid polypeptide reads, in one-letter code: 3-isopropylmalate dehydratase large subunit (473 aa).

Residues Cys353, Cys414, and Cys417 each contribute to the [4Fe-4S] cluster site.

This sequence belongs to the aconitase/IPM isomerase family. LeuC type 1 subfamily. As to quaternary structure, heterodimer of LeuC and LeuD. It depends on [4Fe-4S] cluster as a cofactor.

The enzyme catalyses (2R,3S)-3-isopropylmalate = (2S)-2-isopropylmalate. Its pathway is amino-acid biosynthesis; L-leucine biosynthesis; L-leucine from 3-methyl-2-oxobutanoate: step 2/4. In terms of biological role, catalyzes the isomerization between 2-isopropylmalate and 3-isopropylmalate, via the formation of 2-isopropylmaleate. The sequence is that of 3-isopropylmalate dehydratase large subunit from Cellvibrio japonicus (strain Ueda107) (Pseudomonas fluorescens subsp. cellulosa).